The following is a 372-amino-acid chain: Heterogeneous nuclear rnp K-like protein 2 (372 aa).

Residues 1–23 are compositionally biased toward polar residues; that stretch reads MSDINDPNSISLPVGSSCTSRGA. The tract at residues 1–49 is disordered; sequence MSDINDPNSISLPVGSSCTSRGASTETFTTSRSTTLFSSQQESKDEGNV. A compositionally biased stretch (low complexity) spans 24–39; it reads STETFTTSRSTTLFSS. KH domains lie at 59-123, 167-232, and 283-354; these read TINH…LGQI, IGTS…LLQI, and EFKA…ESML.

The protein belongs to the HEK2 family. As to quaternary structure, binds RNA.

It localises to the cytoplasm. The protein resides in the P-body. It is found in the nucleus. The protein localises to the chromosome. Its subcellular location is the telomere. Its function is as follows. RNA-binding protein involved in the correct localization of transcripts in the cell. RNA localization is a widespread mechanism for achieving localized protein synthesis. Involved in structural and functional organization of telomeric chromatin and regulates silencing at the HMR locus. This is Heterogeneous nuclear rnp K-like protein 2 (HEK2) from Zygosaccharomyces rouxii (strain ATCC 2623 / CBS 732 / NBRC 1130 / NCYC 568 / NRRL Y-229).